We begin with the raw amino-acid sequence, 54 residues long: UPF0391 membrane protein R00741 (54 aa).

Transmembrane regions (helical) follow at residues 5 to 25 (ALVFLIVAIIAGVLGFGGIAG) and 30 to 50 (IAQVLFFLFLIFLVISLVAGL).

The protein belongs to the UPF0391 family.

It is found in the cell membrane. This chain is UPF0391 membrane protein R00741, found in Rhizobium meliloti (strain 1021) (Ensifer meliloti).